A 1939-amino-acid polypeptide reads, in one-letter code: Myosin-6 (1939 aa).

In terms of domain architecture, Myosin N-terminal SH3-like spans 32-81 (DIRTECFVPDDKEEFVKAKIVSREGGKVTAETENGKTVTVKEDQVMQQNP). In terms of domain architecture, Myosin motor spans 85–780 (DKIEDMAMLT…LLGLLEEMRD (696 aa)). Position 129 is an N6,N6,N6-trimethyllysine (lysine 129). Position 178–185 (178–185 (GESGAGKT)) interacts with ATP. Threonine 379 is subject to Phosphothreonine. Phosphoserine is present on serine 417. 2 actin-binding regions span residues 657 to 679 (LNKL…IPNE) and 759 to 773 (KFGH…GLLG). One can recognise an IQ domain in the interval 783–812 (LSRIITRIQAQARGQLMRIEFKKMVERRDA). Residues 842 to 1939 (LKSAETEKEM…GAKQKMHDEE (1098 aa)) adopt a coiled-coil conformation. A phosphoserine mark is found at serine 1090 and serine 1139. At tyrosine 1261 the chain carries Phosphotyrosine. Position 1271 is a phosphoserine (serine 1271). Phosphothreonine occurs at positions 1277 and 1284. Serine 1309 bears the Phosphoserine mark. Tyrosine 1310 is subject to Phosphotyrosine. Threonine 1311 bears the Phosphothreonine mark. Residue serine 1512 is modified to Phosphoserine. Residues threonine 1515 and threonine 1681 each carry the phosphothreonine modification. A disordered region spans residues 1908–1939 (AEERADIAESQVNKLRAKSRDIGAKQKMHDEE). Basic and acidic residues predominate over residues 1925–1939 (KSRDIGAKQKMHDEE).

It belongs to the TRAFAC class myosin-kinesin ATPase superfamily. Myosin family. As to quaternary structure, muscle myosin is a hexameric protein that consists of 2 heavy chain subunits (MHC), 2 alkali light chain subunits (MLC) and 2 regulatory light chain subunits (MLC-2).

The protein localises to the cytoplasm. It localises to the myofibril. Its function is as follows. Muscle contraction. The protein is Myosin-6 (MYH6) of Mesocricetus auratus (Golden hamster).